The primary structure comprises 90 residues: Small ribosomal subunit protein bS18 (90 aa).

Belongs to the bacterial ribosomal protein bS18 family. In terms of assembly, part of the 30S ribosomal subunit. Forms a tight heterodimer with protein bS6.

Binds as a heterodimer with protein bS6 to the central domain of the 16S rRNA, where it helps stabilize the platform of the 30S subunit. The chain is Small ribosomal subunit protein bS18 from Bacteroides fragilis (strain YCH46).